Here is a 417-residue protein sequence, read N- to C-terminus: Calreticulin (417 aa).

Residues 1 to 17 form the signal peptide; that stretch reads MLLSVPLLLGLLGLAAA. Residues 18-197 form an N-domain region; the sequence is EPAVYFKEQF…NSQVESGSLE (180 aa). A Ca(2+)-binding site is contributed by Gln-26. Lys-48 carries the N6-acetyllysine modification. Residues Lys-62 and Lys-64 each contribute to the Ca(2+) site. Cysteines 105 and 137 form a disulfide. The an alpha-D-glucoside site is built by Tyr-109, Lys-111, Tyr-128, and Asp-135. N6-acetyllysine is present on Lys-159. The stretch at 191 to 202 is one 1-1 repeat; sequence VESGSLEDDWDF. Residues 191–255 form a 4 X approximate repeats region; it reads VESGSLEDDW…DAKKPEDWDE (65 aa). A disordered region spans residues 193 to 278; that stretch reads SGSLEDDWDF…PEYKGEWKPR (86 aa). The interval 198 to 308 is P-domain; that stretch reads DDWDFLPPKK…YSPDPSIYAY (111 aa). Residues 207–251 are compositionally biased toward basic and acidic residues; the sequence is KIKDPDASKPEDWDERAKIDDPTDSKPEDWDKPEHIPDPDAKKPE. Residue Lys-209 is modified to N6-acetyllysine. Tandem repeats lie at residues 210-221, 227-238, 244-255, 259-269, 273-283, and 287-297. The tract at residues 237–270 is interaction with PPIB; that stretch reads DKPEHIPDPDAKKPEDWDEEMDGEWEPPVIQNPE. The segment covering 252 to 261 has biased composition (acidic residues); that stretch reads DWDEEMDGEW. Residues 259–297 form a 3 X approximate repeats region; that stretch reads GEWEPPVIQNPEYKGEWKPRQIDNPDYKGTWIHPEIDNP. The C-domain stretch occupies residues 309 to 417; that stretch reads DNFGVLGLDL…DVPGQAKDEL (109 aa). Asp-317 serves as a coordination point for an alpha-D-glucoside. Residue Asp-328 coordinates Ca(2+). The segment at 350 to 417 is disordered; it reads TKAAEKQMKD…DVPGQAKDEL (68 aa). Residues 352–379 show a composition bias toward basic and acidic residues; it reads AAEKQMKDKQDEEQRLKEEEEDKKRKEE. The segment covering 380-409 has biased composition (acidic residues); that stretch reads EEAEDKEDDEDKDEDEEDEEDKEEDEEEDV. The Prevents secretion from ER motif lies at 414 to 417; it reads KDEL.

Belongs to the calreticulin family. In terms of assembly, monomer. Component of an EIF2 complex at least composed of CELF1/CUGBP1, CALR, CALR3, EIF2S1, EIF2S2, HSP90B1 and HSPA5. Interacts with PDIA3/ERp57 and SPACA9. Interacts with TRIM21. Interacts with NR3C1. Interacts with PPIB. Interacts (via P-domain) with PDIA5. Interacts with GABARAP. Interacts with CLCC1.

The protein localises to the endoplasmic reticulum lumen. Its subcellular location is the cytoplasm. It is found in the cytosol. The protein resides in the secreted. It localises to the extracellular space. The protein localises to the extracellular matrix. Its subcellular location is the cell surface. It is found in the sarcoplasmic reticulum lumen. The protein resides in the cytoplasmic vesicle. It localises to the secretory vesicle. The protein localises to the cortical granule. Its subcellular location is the cytoplasmic granule. In terms of biological role, calcium-binding chaperone that promotes folding, oligomeric assembly and quality control in the endoplasmic reticulum (ER) via the calreticulin/calnexin cycle. This lectin interacts transiently with almost all of the monoglucosylated glycoproteins that are synthesized in the ER. Interacts with the DNA-binding domain of NR3C1 and mediates its nuclear export. Involved in maternal gene expression regulation. May participate in oocyte maturation via the regulation of calcium homeostasis. This chain is Calreticulin (CALR), found in Chlorocebus aethiops (Green monkey).